Here is a 296-residue protein sequence, read N- to C-terminus: Cytidine deaminase (296 aa).

CMP/dCMP-type deaminase domains are found at residues 47–167 (SQDE…FGPA) and 186–296 (ESAD…VDPV). Position 88-90 (88-90 (NLE)) interacts with substrate. Histidine 101 is a binding site for Zn(2+). Residue glutamate 103 is the Proton donor of the active site. Residues cysteine 128 and cysteine 131 each contribute to the Zn(2+) site.

This sequence belongs to the cytidine and deoxycytidylate deaminase family. As to quaternary structure, homodimer. It depends on Zn(2+) as a cofactor.

The catalysed reaction is cytidine + H2O + H(+) = uridine + NH4(+). The enzyme catalyses 2'-deoxycytidine + H2O + H(+) = 2'-deoxyuridine + NH4(+). Functionally, this enzyme scavenges exogenous and endogenous cytidine and 2'-deoxycytidine for UMP synthesis. The sequence is that of Cytidine deaminase from Shewanella loihica (strain ATCC BAA-1088 / PV-4).